Here is a 181-residue protein sequence, read N- to C-terminus: Adenylate kinase (181 aa).

10–15 (GAGKGT) contacts ATP. The segment at 30 to 59 (STGELFRKNIQDGTKLGVEAKRYLDAGDLV) is NMP. AMP contacts are provided by residues T31, R36, 57 to 59 (DLV), 85 to 88 (GYPR), and Q92. The interval 126–132 (GRGRADD) is LID. R127 lines the ATP pocket. The AMP site is built by R129 and R140. G166 serves as a coordination point for ATP.

The protein belongs to the adenylate kinase family. In terms of assembly, monomer.

The protein localises to the cytoplasm. It catalyses the reaction AMP + ATP = 2 ADP. The protein operates within purine metabolism; AMP biosynthesis via salvage pathway; AMP from ADP: step 1/1. Functionally, catalyzes the reversible transfer of the terminal phosphate group between ATP and AMP. Plays an important role in cellular energy homeostasis and in adenine nucleotide metabolism. The protein is Adenylate kinase of Mycobacterium ulcerans (strain Agy99).